The following is a 185-amino-acid chain: Hypoxanthine/guanine phosphoribosyltransferase (185 aa).

The protein belongs to the purine/pyrimidine phosphoribosyltransferase family. Archaeal HPRT subfamily. Homodimer.

The protein resides in the cytoplasm. The catalysed reaction is IMP + diphosphate = hypoxanthine + 5-phospho-alpha-D-ribose 1-diphosphate. The enzyme catalyses GMP + diphosphate = guanine + 5-phospho-alpha-D-ribose 1-diphosphate. It functions in the pathway purine metabolism; IMP biosynthesis via salvage pathway; IMP from hypoxanthine: step 1/1. In terms of biological role, catalyzes a salvage reaction resulting in the formation of IMP that is energically less costly than de novo synthesis. This is Hypoxanthine/guanine phosphoribosyltransferase from Aciduliprofundum boonei (strain DSM 19572 / T469).